The primary structure comprises 154 residues: Deoxyuridine 5'-triphosphate nucleotidohydrolase (154 aa).

Substrate-binding positions include 70–72 (RSG), asparagine 83, 87–89 (LID), and methionine 97.

This sequence belongs to the dUTPase family. The cofactor is Mg(2+).

It carries out the reaction dUTP + H2O = dUMP + diphosphate + H(+). It functions in the pathway pyrimidine metabolism; dUMP biosynthesis; dUMP from dCTP (dUTP route): step 2/2. Functionally, this enzyme is involved in nucleotide metabolism: it produces dUMP, the immediate precursor of thymidine nucleotides and it decreases the intracellular concentration of dUTP so that uracil cannot be incorporated into DNA. This is Deoxyuridine 5'-triphosphate nucleotidohydrolase from Buchnera aphidicola subsp. Acyrthosiphon pisum (strain 5A).